The primary structure comprises 761 residues: Neurotrypsin (761 aa).

Positions 1–21 (MALARCVLAVILGVLSEVARA) are cleaved as a signal peptide. The interval 26–88 (HSPLHRPHPS…PTISRRCGAG (63 aa)) is disordered. Residues 54-63 (TPRFPLPPRA) show a composition bias toward pro residues. The Kringle domain maps to 85–157 (CGAGEPWGNA…GKVDWGYCDC (73 aa)). Intrachain disulfides connect Cys-85-Cys-157, Cys-101-Cys-141, Cys-130-Cys-155, Cys-191-Cys-255, Cys-204-Cys-265, Cys-235-Cys-245, Cys-298-Cys-361, Cys-311-Cys-371, Cys-341-Cys-351, Cys-411-Cys-475, Cys-424-Cys-485, Cys-455-Cys-465, Cys-505-Cys-636, Cys-547-Cys-563, Cys-651-Cys-717, Cys-680-Cys-694, and Cys-707-Cys-736. Residue Asn-93 is glycosylated (N-linked (GlcNAc...) asparagine). SRCR domains are found at residues 166–267 (IRLV…SCAP), 273–373 (IRLS…TCYP), and 386–487 (IRLM…ICDY). Positions 505-516 (CGLRLLHRRQKR) are zymogen activation region. Residues 517 to 760 (IIGGNNSLRG…FVPWIKSVTS (244 aa)) form the Peptidase S1 domain. Asn-521 is a glycosylation site (N-linked (GlcNAc...) asparagine). His-562 acts as the Charge relay system in catalysis. N-linked (GlcNAc...) asparagine glycosylation occurs at Asn-569. The active-site Charge relay system is the Asp-612. The Charge relay system role is filled by Ser-711.

The protein belongs to the peptidase S1 family.

The protein resides in the secreted. Functionally, plays a role in neuronal plasticity and the proteolytic action may subserve structural reorganizations associated with learning and memory operations. The protein is Neurotrypsin (Prss12) of Rattus norvegicus (Rat).